A 605-amino-acid polypeptide reads, in one-letter code: Isocitrate dehydrogenase kinase/phosphatase (605 aa).

ATP is bound by residues 327 to 333 and Lys348; that span reads APGIKGL. The active site involves Asp383.

This sequence belongs to the AceK family.

It localises to the cytoplasm. The enzyme catalyses L-seryl-[isocitrate dehydrogenase] + ATP = O-phospho-L-seryl-[isocitrate dehydrogenase] + ADP + H(+). Its function is as follows. Bifunctional enzyme which can phosphorylate or dephosphorylate isocitrate dehydrogenase (IDH) on a specific serine residue. This is a regulatory mechanism which enables bacteria to bypass the Krebs cycle via the glyoxylate shunt in response to the source of carbon. When bacteria are grown on glucose, IDH is fully active and unphosphorylated, but when grown on acetate or ethanol, the activity of IDH declines drastically concomitant with its phosphorylation. The chain is Isocitrate dehydrogenase kinase/phosphatase from Burkholderia orbicola (strain AU 1054).